The following is a 92-amino-acid chain: Acylphosphatase (92 aa).

A disulfide bridge links Cys5 with Cys49. Residues 5-92 enclose the Acylphosphatase-like domain; it reads CIIAWIYGRV…SGELTDFRIR (88 aa). Catalysis depends on residues Arg20 and Asn38.

Belongs to the acylphosphatase family.

It catalyses the reaction an acyl phosphate + H2O = a carboxylate + phosphate + H(+). The chain is Acylphosphatase from Shigella boydii serotype 4 (strain Sb227).